A 236-amino-acid polypeptide reads, in one-letter code: Lipoprotein NlpE (236 aa).

Residues 1-20 form the signal peptide; sequence MVKKAIVTAMAVISLFTLMG. Residue Cys-21 is the site of N-palmitoyl cysteine attachment. Cys-21 is lipidated: S-diacylglycerol cysteine. Residues 21-100 form an N-terminal domain region; that stretch reads CNNRAEVDTL…WARTADKLVL (80 aa). The Periplasmic portion of the chain corresponds to 21–236; that stretch reads CNNRAEVDTL…PNQDCSSLGQ (216 aa). The short motif at 51 to 54 is the CXXC element; the sequence is CADC. The C-terminal domain stretch occupies residues 126–236; it reads PIESQFNYTL…PNQDCSSLGQ (111 aa). A could contain a copper-binding motif region spans residues 144-156; it reads MTPMTLRGMYFYM. Cys-165 and Cys-231 form a disulfide bridge.

Probably exists as a monomer in vivo, can however form homodimers which swap domains. Post-translationally, palmitoylated. In terms of processing, seems to only form a disulfide bond between Cys-165 and Cys-231. The 2 other cysteine residues may however be chemically active.

The protein localises to the cell outer membrane. Involved in copper homeostasis, could be involved in both copper efflux and the delivery of copper to copper-dependent enzymes. Required for efficient binding of stationary phase cells to hydrophobic surfaces, part of the process of biofilm formation. Functions during envelope stress responses; when overproduced induces degP through the activation of the two-component envelope stress response system CpxA/CpxR. DegP induction seems to require membrane anchoring of this protein. Structural changes and/or interaction of the CXXC motif with its environment may lead to activation of the Cpx stress response. The protein is Lipoprotein NlpE of Escherichia coli (strain K12).